A 324-amino-acid chain; its full sequence is Polyprenol dehydrogenase (324 aa).

The Proton acceptor role is filled by Tyr-206. The NAD(+) site is built by Tyr-206, Lys-210, and Thr-243.

It belongs to the short-chain dehydrogenases/reductases (SDR) family.

It localises to the lipid droplet. It catalyses the reaction a di-trans,poly-cis-polyprenol + NAD(+) = a di-trans,poly-cis-polyprenal + NADH + H(+). The enzyme catalyses a di-trans,poly-cis-polyprenol + NADP(+) = a di-trans,poly-cis-polyprenal + NADPH + H(+). The catalysed reaction is a di-trans,poly-cis-dolichol + NADP(+) = a di-trans,poly-cis-dolichal + NADPH + H(+). It carries out the reaction a di-trans,poly-cis-dolichol + NAD(+) = a di-trans,poly-cis-dolichal + NADH + H(+). It participates in protein modification; protein glycosylation. Oxidoreductase that plays a key role in early steps of protein N-linked glycosylation by mediating two non-consecutive steps in dolichol biosynthesis. Acts both as a NAD(+)-dependent dehydrogenase and as a NADPH-dependent reductase during the conversion of polyprenol into dolichol. First catalyzes the NAD(+)-dependent dehydrogenation of polyprenol into polyprenal; polyprenal is then reduced into dolichal by srd5a3. It then catalyzes the NADPH-dependent reduction of dolichal into dolichol. The chain is Polyprenol dehydrogenase from Danio rerio (Zebrafish).